Consider the following 373-residue polypeptide: Outer membrane protein assembly factor BamC (373 aa).

Residues 1–16 (MLKQVTPLVLIAAVTA) form the signal peptide. Residue Cys-17 is the site of N-palmitoyl cysteine attachment. Residue Cys-17 is the site of S-diacylglycerol cysteine attachment.

The protein belongs to the BamC family. As to quaternary structure, part of the Bam complex.

Its subcellular location is the cell outer membrane. Part of the outer membrane protein assembly complex, which is involved in assembly and insertion of beta-barrel proteins into the outer membrane. The polypeptide is Outer membrane protein assembly factor BamC (Shewanella sediminis (strain HAW-EB3)).